Consider the following 76-residue polypeptide: ATP synthase subunit 9, mitochondrial (76 aa).

The next 2 membrane-spanning stretches (helical) occupy residues 14 to 34 (IATL…VALI) and 52 to 72 (ILGF…SFLL).

The protein belongs to the ATPase C chain family. In terms of assembly, F-type ATPases have 2 components, CF(1) - the catalytic core - and CF(0) - the membrane proton channel. CF(1) has five subunits: alpha(3), beta(3), gamma(1), delta(1), epsilon(1). CF(0) has three main subunits: a, b and c.

The protein localises to the mitochondrion membrane. In terms of biological role, mitochondrial membrane ATP synthase (F(1)F(0) ATP synthase or Complex V) produces ATP from ADP in the presence of a proton gradient across the membrane which is generated by electron transport complexes of the respiratory chain. F-type ATPases consist of two structural domains, F(1) - containing the extramembraneous catalytic core and F(0) - containing the membrane proton channel, linked together by a central stalk and a peripheral stalk. During catalysis, ATP synthesis in the catalytic domain of F(1) is coupled via a rotary mechanism of the central stalk subunits to proton translocation. Part of the complex F(0) domain. A homomeric c-ring of probably 10 subunits is part of the complex rotary element. In Candida albicans (strain SC5314 / ATCC MYA-2876) (Yeast), this protein is ATP synthase subunit 9, mitochondrial (ATP9).